The primary structure comprises 127 residues: Histidine-containing phosphotransfer protein 4 (127 aa).

In terms of domain architecture, HPt spans 27 to 122; sequence NPNFVEEVSA…STLRKKLEHY (96 aa). A Phosphohistidine modification is found at His68.

As to quaternary structure, interacts with the B-type response regulators ARR1 and ARR2. Post-translationally, two-component system major event consists of a His-to-Asp phosphorelay between a sensor histidine kinase (HK) and a response regulator (RR). In plants, the His-to-Asp phosphorelay involves an additional intermediate named Histidine-containing phosphotransfer protein (HPt). This multistep phosphorelay consists of a His-Asp-His-Asp sequential transfer of a phosphate group between first a His and an Asp of the HK protein, followed by the transfer to a conserved His of the HPt protein and finally the transfer to an Asp in the receiver domain of the RR protein. As to expression, predominantly expressed in aerial parts of the plant.

The protein resides in the cytoplasm. It is found in the cytosol. Its subcellular location is the nucleus. In terms of biological role, functions as a two-component phosphorelay mediator between cytokinin sensor histidine kinases and response regulators (B-type ARRs). Plays an important role in propagating cytokinin signal transduction through the multistep His-to-Asp phosphorelay. The polypeptide is Histidine-containing phosphotransfer protein 4 (AHP4) (Arabidopsis thaliana (Mouse-ear cress)).